A 180-amino-acid chain; its full sequence is Acireductone dioxygenase (180 aa).

Fe(2+)-binding residues include H97, H99, E103, and H141. The Ni(2+) site is built by H97, H99, E103, and H141.

It belongs to the acireductone dioxygenase (ARD) family. In terms of assembly, monomer. Fe(2+) is required as a cofactor. Mg(2+) serves as cofactor. Requires Ni(2+) as cofactor. The cofactor is Mn(2+). It depends on Co(2+) as a cofactor.

The enzyme catalyses 1,2-dihydroxy-5-(methylsulfanyl)pent-1-en-3-one + O2 = 3-(methylsulfanyl)propanoate + CO + formate + 2 H(+). It catalyses the reaction 1,2-dihydroxy-5-(methylsulfanyl)pent-1-en-3-one + O2 = 4-methylsulfanyl-2-oxobutanoate + formate + 2 H(+). Its pathway is amino-acid biosynthesis; L-methionine biosynthesis via salvage pathway; L-methionine from S-methyl-5-thio-alpha-D-ribose 1-phosphate: step 5/6. Its function is as follows. Catalyzes 2 different reactions between oxygen and the acireductone 1,2-dihydroxy-3-keto-5-methylthiopentene (DHK-MTPene) depending upon the metal bound in the active site. Fe-containing acireductone dioxygenase (Fe-ARD) produces formate and 2-keto-4-methylthiobutyrate (KMTB), the alpha-ketoacid precursor of methionine in the methionine recycle pathway. Ni-containing acireductone dioxygenase (Ni-ARD) produces methylthiopropionate, carbon monoxide and formate, and does not lie on the methionine recycle pathway. This Klebsiella oxytoca protein is Acireductone dioxygenase (mtnD).